The chain runs to 237 residues: Protein GrpE (237 aa).

Disordered stretches follow at residues 1–52 (MSGD…RLQQ) and 200–237 (KVSM…EPGV). Residues 27–40 (ASMNSDEGQPSAQS) are compositionally biased toward polar residues. Over residues 204–218 (GPGPQSGASPSSAQS) the composition is skewed to low complexity.

Belongs to the GrpE family. As to quaternary structure, homodimer.

The protein resides in the cytoplasm. Participates actively in the response to hyperosmotic and heat shock by preventing the aggregation of stress-denatured proteins, in association with DnaK and GrpE. It is the nucleotide exchange factor for DnaK and may function as a thermosensor. Unfolded proteins bind initially to DnaJ; upon interaction with the DnaJ-bound protein, DnaK hydrolyzes its bound ATP, resulting in the formation of a stable complex. GrpE releases ADP from DnaK; ATP binding to DnaK triggers the release of the substrate protein, thus completing the reaction cycle. Several rounds of ATP-dependent interactions between DnaJ, DnaK and GrpE are required for fully efficient folding. This is Protein GrpE from Prochlorococcus marinus (strain MIT 9303).